We begin with the raw amino-acid sequence, 133 residues long: Small ribosomal subunit protein uS8 (133 aa).

It belongs to the universal ribosomal protein uS8 family. In terms of assembly, part of the 30S ribosomal subunit. Contacts proteins S5 and S12.

Its function is as follows. One of the primary rRNA binding proteins, it binds directly to 16S rRNA central domain where it helps coordinate assembly of the platform of the 30S subunit. This Anaplasma phagocytophilum (strain HZ) protein is Small ribosomal subunit protein uS8.